A 283-amino-acid polypeptide reads, in one-letter code: Movement protein (283 aa).

This sequence belongs to the tenuiviruses pc4 protein family.

In terms of biological role, transports viral genome to neighboring plant cells directly through plasmosdesmata, without any budding. The movement protein allows efficient cell to cell propagation, by bypassing the host cell wall barrier. In Maize stripe virus (MStV), this protein is Movement protein.